A 289-amino-acid polypeptide reads, in one-letter code: Acetyl-coenzyme A carboxylase carboxyl transferase subunit beta (289 aa).

A CoA carboxyltransferase N-terminal domain is found at 28 to 289 (VMTKCPKCKK…QGGGMAVWQS (262 aa)). Positions 32, 35, 51, and 54 each coordinate Zn(2+). A C4-type zinc finger spans residues 32–54 (CPKCKKIMYTKELLKNLKVCVNC).

It belongs to the AccD/PCCB family. As to quaternary structure, acetyl-CoA carboxylase is a heterohexamer composed of biotin carboxyl carrier protein (AccB), biotin carboxylase (AccC) and two subunits each of ACCase subunit alpha (AccA) and ACCase subunit beta (AccD). The cofactor is Zn(2+).

The protein resides in the cytoplasm. It carries out the reaction N(6)-carboxybiotinyl-L-lysyl-[protein] + acetyl-CoA = N(6)-biotinyl-L-lysyl-[protein] + malonyl-CoA. It functions in the pathway lipid metabolism; malonyl-CoA biosynthesis; malonyl-CoA from acetyl-CoA: step 1/1. In terms of biological role, component of the acetyl coenzyme A carboxylase (ACC) complex. Biotin carboxylase (BC) catalyzes the carboxylation of biotin on its carrier protein (BCCP) and then the CO(2) group is transferred by the transcarboxylase to acetyl-CoA to form malonyl-CoA. In Bacillus mycoides (strain KBAB4) (Bacillus weihenstephanensis), this protein is Acetyl-coenzyme A carboxylase carboxyl transferase subunit beta.